A 308-amino-acid polypeptide reads, in one-letter code: Mycothiol acetyltransferase (308 aa).

N-acetyltransferase domains lie at R8 to R155 and V160 to R308. E39 is a binding site for 1D-myo-inositol 2-(L-cysteinylamino)-2-deoxy-alpha-D-glucopyranoside. L84 to V86 lines the acetyl-CoA pocket. E187, K226, and E240 together coordinate 1D-myo-inositol 2-(L-cysteinylamino)-2-deoxy-alpha-D-glucopyranoside. Residues L244–I246 and Q251–R257 each bind acetyl-CoA. Y278 contributes to the 1D-myo-inositol 2-(L-cysteinylamino)-2-deoxy-alpha-D-glucopyranoside binding site.

Belongs to the acetyltransferase family. MshD subfamily. In terms of assembly, monomer.

The enzyme catalyses 1D-myo-inositol 2-(L-cysteinylamino)-2-deoxy-alpha-D-glucopyranoside + acetyl-CoA = mycothiol + CoA + H(+). In terms of biological role, catalyzes the transfer of acetyl from acetyl-CoA to desacetylmycothiol (Cys-GlcN-Ins) to form mycothiol. The protein is Mycothiol acetyltransferase of Geodermatophilus obscurus (strain ATCC 25078 / DSM 43160 / JCM 3152 / CCUG 61914 / KCC A-0152 / KCTC 9177 / NBRC 13315 / NRRL B-3577 / G-20).